We begin with the raw amino-acid sequence, 252 residues long: TLC domain-containing protein 1 (252 aa).

The first 29 residues, 1 to 29 (MGPGWRAPSAALVGGSVALFGALRRAALA), serve as a signal peptide directing secretion. Residues 30–47 (LPRPAAVRSRPGRVWRWR) are Extracellular-facing. One can recognise a TLC domain in the interval 41-235 (GRVWRWRNLL…LLRSDFFPSL (195 aa)). A helical membrane pass occupies residues 48–68 (NLLVSFAHSVLAGLWALFSLW). The Cytoplasmic segment spans residues 69–84 (QSPELLSDIQDGYSVS). The helical transmembrane segment at 85 to 105 (GHLLVCFSSGYFIHDSLDIIF) threads the bilayer. At 106 to 124 (NQQSRSSWEYLVHHAMAIS) the chain is on the extracellular side. The helical intramembrane region spans 125-145 (AFVSLIITGRFLVAAMLLLLV). Residues 146 to 174 (EVSNIFLTIRMLLKMSNVPSPALYEANKY) are Extracellular-facing. Residues 175 to 195 (VNLVMYFAFRLAPQVYLTWYF) form a helical membrane-spanning segment. Topologically, residues 196–202 (VRYVEVQ) are cytoplasmic. The helical transmembrane segment at 203 to 223 (GQGAFLMANLLLLDAMILMYF) threads the bilayer. Over 224–252 (SRLLRSDFFPSLRKGSVGRDVDGEKFLID) the chain is Extracellular.

In terms of assembly, interacts with CACNA1C in vitro; however the relevance of the interaction in vivo is unclear.

Its subcellular location is the cell membrane. In terms of biological role, regulates the composition and fluidity of the plasma membrane. Inhibits the incorporation of membrane-fluidizing phospholipids containing omega-3 long-chain polyunsaturated fatty acids (LCPUFA) and thereby promotes membrane rigidity. Does not appear to have any effect on LCPUFA synthesis. The chain is TLC domain-containing protein 1 (TLCD1) from Gallus gallus (Chicken).